The following is a 657-amino-acid chain: MSAAQAALIPDAAVPNGGASVVSAAEPSTSTSPEPIDISSLEQRTLNPDSFLYSELARSHLGERASTVLSVLVNKGRLSTREIHSFIPELSLSSIKTVLVSLIQLRCVQYLEETSLSGRKTLYYYFNEEGLFLMLYAGDISDRIVQYFNQDEEQHLVNIAQQIIHNVLALGSLTVKDYLASESNSNDTDIFNIHQAFVRLADLEFLVPLQGIHYTPIVDLWNMLYLREYKKLPKNTTQSDLKKRNEAKAKAKLEFNRIVSSPSQDSNGKIFLTDSGTGFKKVNESVSLTFNLERYLKSRRSNQLVQFAKSRIGTTSSKIYAVALSMTEQHSNGLSHPLSKTGLFQDLDERTSLEEDLKLDEENVKGVSFTALDVARRLPSNLDLRGTLVHSNQSLKRKQKHNQSPPQFEKRIKTEDGFVVPPLPTVMEESEEENEEGDANLDLDEDDSDPRSVSLVNGHLRLLLTANIPFIKESKPGQFFVPYSSLIPILKSSTYDSIIASTLGPSSHRVLRCIRDNGLCTERTITTTSLMREKDVRTVIGTLVKYNAIEIQEVPRTVDRAASRAVFLFRIKEKHAFNTMKLNLTWNLARLISKLETLKEENATLLKKANRDDVKGREMELLLASEINQLKVVNDRELNGLVRRHRLLSLWEVFKLF.

A disordered region spans residues 390–450 (HSNQSLKRKQ…LDLDEDDSDP (61 aa)). Acidic residues predominate over residues 428–448 (EESEEENEEGDANLDLDEDDS). A leucine-zipper region spans residues 584-605 (LTWNLARLISKLETLKEENATL).

This sequence belongs to the RNA polymerase beta chain family. As to quaternary structure, component of the RNA polymerase III (Pol III) complex consisting of 17 subunits.

Its subcellular location is the nucleus. DNA-dependent RNA polymerase catalyzes the transcription of DNA into RNA using the four ribonucleoside triphosphates as substrates. Specific core component of RNA polymerase III which synthesizes small RNAs, such as 5S rRNA and tRNAs. In Kluyveromyces lactis (strain ATCC 8585 / CBS 2359 / DSM 70799 / NBRC 1267 / NRRL Y-1140 / WM37) (Yeast), this protein is DNA-directed RNA polymerase III subunit RPC3 (RPC82).